Here is a 151-residue protein sequence, read N- to C-terminus: Large ribosomal subunit protein bL9 (151 aa).

The protein belongs to the bacterial ribosomal protein bL9 family.

Functionally, binds to the 23S rRNA. In Chlorobium chlorochromatii (strain CaD3), this protein is Large ribosomal subunit protein bL9.